The following is a 207-amino-acid chain: Guanylate kinase (207 aa).

The 181-residue stretch at 4–184 (NMYYAISAPS…TLNKIKTIII (181 aa)) folds into the Guanylate kinase-like domain. 11–18 (APSGTGKS) contacts ATP.

Belongs to the guanylate kinase family.

The protein localises to the cytoplasm. It catalyses the reaction GMP + ATP = GDP + ADP. Functionally, essential for recycling GMP and indirectly, cGMP. This Wigglesworthia glossinidia brevipalpis protein is Guanylate kinase.